Reading from the N-terminus, the 137-residue chain is Large ribosomal subunit protein uL16c (137 aa).

Belongs to the universal ribosomal protein uL16 family. In terms of assembly, part of the 50S ribosomal subunit.

The protein resides in the plastid. The chain is Large ribosomal subunit protein uL16c from Aneura mirabilis (Parasitic liverwort).